The sequence spans 450 residues: MSLRLPSGSRRASPRPTTGSLRLSGAGASFGAGNACSMPGIGSSFSCAFGSSSSGGNALGGNPCAGFTMNEGGLLSGNEKVTMQNLNDRLASYLENVRALEEANADLEQKIKGWYEKFGPGSCRGLDHDYSRYFPIIEDLKNQIIASTTSNANAVLQIDNARLTADDFRLKYENELALHQSVESDVNGLRRVLDEITLCRTDLEIQYETLSEELTYLKKNHKEEMQVLQCAAGGNVNVEMNAAPGVDLTVLLNNMRAEYEALAEQNRRDAEAWFNEKSASLQQQITEDVGATTSARNELTEMKRNLQTLEIELQSLLATKHSLECSLTETEGNYCAQLAQIQAQIGALEEQLHQVRTETEGQKLEYEQLLDIKVHLEKEIETYCLLIGGDDGACKSGGYKSKDYAAGNMGNQMKDPIKAIVVKKVLEEVDQRSKILTTRLHSLEEKSQSN.

The segment at 1–24 is disordered; that stretch reads MSLRLPSGSRRASPRPTTGSLRLS. Residues 1 to 78 form a head region; sequence MSLRLPSGSR…MNEGGLLSGN (78 aa). The segment at 79–114 is coil 1A; it reads EKVTMQNLNDRLASYLENVRALEEANADLEQKIKGW. An IF rod domain is found at 79 to 394; sequence EKVTMQNLND…LLIGGDDGAC (316 aa). Positions 115 to 136 are linker 1; the sequence is YEKFGPGSCRGLDHDYSRYFPI. The tract at residues 137 to 228 is coil 1B; it reads IEDLKNQIIA…KNHKEEMQVL (92 aa). Positions 229 to 251 are linker 12; it reads QCAAGGNVNVEMNAAPGVDLTVL. The coil 2 stretch occupies residues 252–390; that stretch reads LNNMRAEYEA…ETYCLLIGGD (139 aa). Residues 391-450 are tail; sequence DGACKSGGYKSKDYAAGNMGNQMKDPIKAIVVKKVLEEVDQRSKILTTRLHSLEEKSQSN. Serine 442 is subject to Phosphoserine.

Belongs to the intermediate filament family. Heterodimer of a type I and a type II keratin. Heterodimer with type II keratin KRT5 leading to the formation of keratin intermediate filament (KIF) network. Interacts with KRT6A to form filaments.

Its subcellular location is the cytoplasm. In terms of biological role, essential for the proper assembly of type I and type II keratin protein complexes and formation of keratin intermediate filaments in the inner root sheath (irs). Plays a role in the cytoskeleton organization. The protein is Keratin, type I cytoskeletal 25 of Capra hircus (Goat).